We begin with the raw amino-acid sequence, 231 residues long: MNRLMIVSLLGIATVLGGCVNPPPKPNDPYYAPVLPRTPLPAAQNNGAIYQAGFEQNLYDDRKAFRVGDIITITLNEKTQASKKANSDIQKDSKTKMGLTSLFGSGMTTNNPIGGGDLSLSAEYGGSRDAKGDSQAGQSNSLTGSITVTVAEVLPNGILSVRGEKWMTLNTGNELVRIAGLVRADDIATDNTVPSTRVADARITYSGTGAFADASQPGWLDRFFLSPLWPF.

A signal peptide spans 1–18 (MNRLMIVSLLGIATVLGG). Cysteine 19 is lipidated: N-palmitoyl cysteine. Residue cysteine 19 is the site of S-diacylglycerol cysteine attachment. Residues 118-141 (LSLSAEYGGSRDAKGDSQAGQSNS) are disordered.

The protein belongs to the FlgH family. In terms of assembly, the basal body constitutes a major portion of the flagellar organelle and consists of four rings (L,P,S, and M) mounted on a central rod.

Its subcellular location is the cell outer membrane. It is found in the bacterial flagellum basal body. Its function is as follows. Assembles around the rod to form the L-ring and probably protects the motor/basal body from shearing forces during rotation. The polypeptide is Flagellar L-ring protein (Pseudomonas paraeruginosa (strain DSM 24068 / PA7) (Pseudomonas aeruginosa (strain PA7))).